The primary structure comprises 227 residues: Urease accessory protein UreG (227 aa).

Basic and acidic residues predominate over residues M1–D10. A disordered region spans residues M1–P22. G35–T42 serves as a coordination point for GTP.

Belongs to the SIMIBI class G3E GTPase family. UreG subfamily. As to quaternary structure, homodimer. UreD, UreF and UreG form a complex that acts as a GTP-hydrolysis-dependent molecular chaperone, activating the urease apoprotein by helping to assemble the nickel containing metallocenter of UreC. The UreE protein probably delivers the nickel.

It localises to the cytoplasm. In terms of biological role, facilitates the functional incorporation of the urease nickel metallocenter. This process requires GTP hydrolysis, probably effectuated by UreG. The sequence is that of Urease accessory protein UreG from Streptomyces avermitilis (strain ATCC 31267 / DSM 46492 / JCM 5070 / NBRC 14893 / NCIMB 12804 / NRRL 8165 / MA-4680).